The primary structure comprises 119 residues: Large ribosomal subunit protein uL18 (119 aa).

The segment at 1-23 (MISKPDKNKTRQRRHARVRGKIS) is disordered. The segment covering 10–20 (TRQRRHARVRG) has biased composition (basic residues).

Belongs to the universal ribosomal protein uL18 family. Part of the 50S ribosomal subunit; part of the 5S rRNA/L5/L18/L25 subcomplex. Contacts the 5S and 23S rRNAs.

Functionally, this is one of the proteins that bind and probably mediate the attachment of the 5S RNA into the large ribosomal subunit, where it forms part of the central protuberance. This Lacticaseibacillus casei (strain BL23) (Lactobacillus casei) protein is Large ribosomal subunit protein uL18.